The sequence spans 555 residues: Urocanate hydratase (555 aa).

Residues 52–53, Gln-130, 176–178, Glu-196, Arg-201, 242–243, 263–267, 273–274, and Tyr-322 each bind NAD(+); these read GG, GMG, NA, QTSAH, and YL. The active site involves Cys-410. Residue Gly-492 participates in NAD(+) binding.

This sequence belongs to the urocanase family. NAD(+) is required as a cofactor.

It localises to the cytoplasm. It catalyses the reaction 4-imidazolone-5-propanoate = trans-urocanate + H2O. It participates in amino-acid degradation; L-histidine degradation into L-glutamate; N-formimidoyl-L-glutamate from L-histidine: step 2/3. Functionally, catalyzes the conversion of urocanate to 4-imidazolone-5-propionate. In Shewanella sp. (strain W3-18-1), this protein is Urocanate hydratase.